The primary structure comprises 130 residues: Small ribosomal subunit protein uS9 (130 aa).

It belongs to the universal ribosomal protein uS9 family.

The protein is Small ribosomal subunit protein uS9 of Histophilus somni (strain 129Pt) (Haemophilus somnus).